Consider the following 183-residue polypeptide: SAYSvFN domain-containing protein 1 (183 aa).

Residues 1 to 105 (MEQRLAEFRA…SFLTNITFLK (105 aa)) lie on the Cytoplasmic side of the membrane. The interval 11 to 36 (ARKRAGLAAQPPAASQGAQTPGEKAE) is disordered. The span at 16 to 36 (GLAAQPPAASQGAQTPGEKAE) shows a compositional bias: low complexity. Positions 91-105 (SCWDQSFLTNITFLK) are middle helical (MH). An intramembrane region (helical) is located at residues 106–126 (VLLWLVLLGLFVELEFGLAYF). Residues 127 to 183 (VLSLFYWMYVGTRGPEEKKEGEKSAYSVFNPGCEAIQGTLTAEQLERELQLRPLAGR) lie on the Cytoplasmic side of the membrane.

This sequence belongs to the SAYSD1 family. Associates (via N-terminus) with ribosomes.

Its subcellular location is the endoplasmic reticulum membrane. The protein localises to the cytoplasmic vesicle membrane. Functionally, ufmylation 'reader' component of a translocation-associated quality control pathway, a mechanism that takes place when a ribosome has stalled during translation, and which is required to degrade clogged substrates. Specifically recognizes and binds ufmylated ribosomes when a ribosome has stalled, promoting the transport of stalled nascent chain via the TRAPP complex to lysosomes for degradation. This is SAYSvFN domain-containing protein 1 from Homo sapiens (Human).